Reading from the N-terminus, the 1129-residue chain is Ubiquitin carboxyl-terminal hydrolase 7 (1129 aa).

Residues 1–20 (MEIETDQSIEAMDTQDTQEV) form a disordered region. In terms of domain architecture, MATH spans 101–222 (ETTFSFTVEN…NNSITLEVHV (122 aa)). Residues 241–548 (VGLKNQGATC…NAYMLVYIRQ (308 aa)) form the USP domain. C250 acts as the Nucleophile in catalysis. H490 acts as the Proton acceptor in catalysis. S1117 bears the Phosphoserine mark.

Belongs to the peptidase C19 family.

It is found in the nucleus. It carries out the reaction Thiol-dependent hydrolysis of ester, thioester, amide, peptide and isopeptide bonds formed by the C-terminal Gly of ubiquitin (a 76-residue protein attached to proteins as an intracellular targeting signal).. In terms of biological role, hydrolase that deubiquitinates target proteins. This is Ubiquitin carboxyl-terminal hydrolase 7 (Usp7) from Drosophila melanogaster (Fruit fly).